A 421-amino-acid polypeptide reads, in one-letter code: 5-hydroxytryptamine receptor 2 (421 aa).

The Extracellular portion of the chain corresponds to 1-21 (MLCGRLRHTMNSTTCFFSHRT). N-linked (GlcNAc...) asparagine glycosylation occurs at asparagine 11. Residues 22 to 42 (VLIGIVGSLIIAVSVVGNVLV) form a helical membrane-spanning segment. Residues 43–59 (CLAIFTEPILSHSKSKF) lie on the Cytoplasmic side of the membrane. The chain crosses the membrane as a helical span at residues 60 to 79 (FIVSLAVADLLLALLVMTFA). The Extracellular segment spans residues 80 to 95 (LVNSLYGYWLFGETFC). A disulfide bridge connects residues cysteine 95 and cysteine 210. The chain crosses the membrane as a helical span at residues 96 to 118 (FIWMSADVMCETASIFSICVISY). Residues 119–138 (NRLKQVQKPLQYEEFMTTTR) lie on the Cytoplasmic side of the membrane. A helical transmembrane segment spans residues 139 to 160 (ALLIIASLWICSFVVSFVPFFL). Residues 161–213 (EWHELSMEEIKTIFKDLISDKVKTSDAHTFSFALEQTLGDNRTSNPKPECLFD) lie on the Extracellular side of the membrane. Residues 214–234 (VHFIYSVIYSLFCFYIPCTLM) traverse the membrane as a helical segment. At 235–274 (LRNYLRLFLIAKKHHVRIKNLHRLHRNQGTQGSKAARTLT) the chain is on the cytoplasmic side. Residues 275 to 295 (IITGTFLACWLPFFIINPIEA) traverse the membrane as a helical segment. Residues 296-304 (VDEHLIPLE) are Extracellular-facing. The helical transmembrane segment at 305-325 (CFMVTIWLGYFNSCVNPIIYG) threads the bilayer. Over 326-421 (TSNSKFRAAF…MLSESDTVFS (96 aa)) the chain is Cytoplasmic.

Belongs to the G-protein coupled receptor 1 family. As to expression, central nervous system.

It localises to the cell membrane. Its function is as follows. This is one of the several different receptors for 5-hydroxytryptamine (serotonin). 5-HT plays important roles in various behavioral and physiological processes in aplysia. These include feeding, locomotion, circadian rhythm, learning and memory, synaptic plasticity, and synaptic growth. This receptor is mediated by G proteins that stimulate phospholipase C. This Aplysia californica (California sea hare) protein is 5-hydroxytryptamine receptor 2 (5HTB2).